A 103-amino-acid polypeptide reads, in one-letter code: Small ribosomal subunit protein uS10 (103 aa).

It belongs to the universal ribosomal protein uS10 family. Part of the 30S ribosomal subunit.

Its function is as follows. Involved in the binding of tRNA to the ribosomes. The polypeptide is Small ribosomal subunit protein uS10 (Bordetella petrii (strain ATCC BAA-461 / DSM 12804 / CCUG 43448)).